The following is a 417-amino-acid chain: Putative competence-damage inducible protein (417 aa).

It belongs to the CinA family.

The chain is Putative competence-damage inducible protein from Shouchella clausii (strain KSM-K16) (Alkalihalobacillus clausii).